A 1107-amino-acid polypeptide reads, in one-letter code: Unconventional myosin-Ie (1107 aa).

Positions 19–692 (SGVDDMVLLS…SLFLLEEMRE (674 aa)) constitute a Myosin motor domain. 112 to 119 (GESGAGKT) contacts ATP. Positions 581–591 (PHYIRCIKPNE) are actin-binding. The IQ domain occupies 695–724 (YDGYARVIQKTWRKFVARKKYVQMREDASD). The TH1 domain maps to 730-922 (KERRRNSINR…NKVLQVSIGP (193 aa)). The disordered stretch occupies residues 920–1052 (IGPGLPKNAR…KPQPKPKPQV (133 aa)). Polar residues-rich tracts occupy residues 933 to 949 (RNTVSSRGYSGGTNNNY), 977 to 989 (SGNQRSNQKSLYT), and 998 to 1012 (RQQSTGSDRLSQTPE). At S1001 the chain carries Phosphoserine. A compositionally biased stretch (pro residues) spans 1034–1051 (RPPPAGGRPKPQPKPKPQ). The SH3 domain maps to 1050-1107 (PQVPQCKALYAYDAQDTDELSFNANDVIDIIKEDPSGWWTGRLRGKQGLFPNNYVTKI).

It belongs to the TRAFAC class myosin-kinesin ATPase superfamily. Myosin family. Interacts with CALM and F-actin. Interacts (via SH3 domain) with SYNJ1, DNM1 and DNM2. Interacts with ARL14EP. Interacts with CARMIL1. Detected in brain stem, brain cortex, cerebellum, stomach, colon, heart, lung, liver, spleen and kidney. Detected in utricle, cochlea, outer hair cell bundle cuticular plate and vestibular epithelia (at protein level). Detected in cochlea and vestibular tissues. Detected in kidney, lung, spleen and intestine.

The protein resides in the cytoplasm. The protein localises to the cytoskeleton. Its subcellular location is the cytoplasmic vesicle. It is found in the clathrin-coated vesicle. It localises to the cell junction. Functionally, myosins are actin-based motor molecules with ATPase activity. Unconventional myosins serve in intracellular movements. Their highly divergent tails bind to membranous compartments, which are then moved relative to actin filaments. Binds to membranes containing anionic phospholipids via its tail domain. Involved in clathrin-mediated endocytosis and intracellular movement of clathrin-coated vesicles. Required for normal morphology of the glomerular basement membrane, normal development of foot processes by kidney podocytes and normal kidney function. In dendritic cells, may control the movement of class II-containing cytoplasmic vesicles along the actin cytoskeleton by connecting them with the actin network via ARL14EP and ARL14. This Rattus norvegicus (Rat) protein is Unconventional myosin-Ie (Myo1e).